The following is a 384-amino-acid chain: MDGETAGEKGSLVPQPGALGAPALGGAPAPGVRREPKKYAVTDDYQLSKQVLGLGVNGKVLECYHRRSGQKCALKLLYDSPKARQEVDHHWQASGGPHIVRILDVYENMHHGKRCLLIVMECMEGGELFSRIQERGDQAFTEREAAEIMRDIGTAIQFLHSQNIAHRDVKPENLLYTSKEKDAVLKLTDFGFAKETTQNALQTPCYTPYYVAPEVLGPEKYDKSCDMWSLGVIMYILLCGFPPFYSNTGQAISPGMKRRIRLGQYGFPKPEWADVSEDAKQLIRLLLKTDPTERLTIMQFMNHPWINQSMEVPQTPLHTARVLEEDKDHWDDVKEEMTSALATMRVDYDQVKIKDLKTSNNRLLNKRRKKQGGSSSASPGCNNQ.

The residue at position 1 (methionine 1) is an N-acetylmethionine. Residues 1–33 are disordered; it reads MDGETAGEKGSLVPQPGALGAPALGGAPAPGVR. Positions 14 to 31 are enriched in low complexity; the sequence is PQPGALGAPALGGAPAPG. Positions 46–306 constitute a Protein kinase domain; it reads QLSKQVLGLG…IMQFMNHPWI (261 aa). Residues 52–60 and lysine 75 each bind ATP; that span reads LGLGVNGKV. Residue aspartate 168 is the Proton acceptor of the active site. Threonine 203 carries the phosphothreonine; by MAPK14 modification. Position 253 is a phosphoserine; by MAPK14 (serine 253). Serine 309 is modified (phosphoserine; by autocatalysis). The interval 309-345 is autoinhibitory helix; sequence SMEVPQTPLHTARVLEEDKDHWDDVKEEMTSALATMR. Threonine 315 is subject to Phosphothreonine; by MAPK14. The Nuclear export signal (NES) motif lies at 337–346; it reads MTSALATMRV. Positions 347-371 are p38 MAPK-binding site; sequence DYDQVKIKDLKTSNNRLLNKRRKKQ. 2 consecutive short sequence motifs (bipartite nuclear localization signal) follow at residues 352 to 355 and 366 to 370; these read KIKD and KRRKK. The tract at residues 359–384 is disordered; that stretch reads SNNRLLNKRRKKQGGSSSASPGCNNQ. Over residues 372-384 the composition is skewed to polar residues; the sequence is GGSSSASPGCNNQ.

The protein belongs to the protein kinase superfamily. CAMK Ser/Thr protein kinase family. In terms of assembly, heterodimer with p38-alpha/MAPK14. The heterodimer with p38-alpha/MAPK14 forms a stable complex: molecules are positioned 'face to face' so that the ATP-binding sites of both kinases are at the heterodimer interface. Interacts with TCF3 and with polycomb proteins, such as PCH2 and BMI1/PCGF4. Post-translationally, phosphorylated and activated by MAPK1/ERK2 and MAPK3/ERK1. Phosphorylated and activated by MAP kinase p38-alpha/MAPK14 at Thr-203, Ser-253 and Thr-315.

It localises to the nucleus. The protein localises to the cytoplasm. The enzyme catalyses L-seryl-[protein] + ATP = O-phospho-L-seryl-[protein] + ADP + H(+). The catalysed reaction is L-threonyl-[protein] + ATP = O-phospho-L-threonyl-[protein] + ADP + H(+). Activated following phosphorylation by p38-alpha/MAPK14 following various stresses. Inhibited by ligand 5B (2'-[2-(1,3-benzodioxol-5-yl)pyrimidin-4-yl]-5',6'-dihydrospiro[piperidine-4,7'-pyrrolo[3,2-c]pyridin]- 4'(1'h)-one) and ligand P4O (2-[2-(2-fluorophenyl)pyridin-4-yl]-1,5,6,7-tetrahydro- 4h-pyrrolo[3,2-c]pyridin-4-one), 2 ATP-competitive inhibitors. In terms of biological role, stress-activated serine/threonine-protein kinase involved in cytokines production, endocytosis, cell migration, chromatin remodeling and transcriptional regulation. Following stress, it is phosphorylated and activated by MAP kinase p38-alpha/MAPK14, leading to phosphorylation of substrates. Phosphorylates serine in the peptide sequence, Hyd-X-R-X(2)-S, where Hyd is a large hydrophobic residue. MAPKAPK2 and MAPKAPK3, share the same function and substrate specificity, but MAPKAPK3 kinase activity and level in protein expression are lower compared to MAPKAPK2. Phosphorylates HSP27/HSPB1, KRT18, KRT20, RCSD1, RPS6KA3, TAB3 and TTP/ZFP36. Mediates phosphorylation of HSP27/HSPB1 in response to stress, leading to dissociate HSP27/HSPB1 from large small heat-shock protein (sHsps) oligomers and impair their chaperone activities and ability to protect against oxidative stress effectively. Involved in inflammatory response by regulating tumor necrosis factor (TNF) and IL6 production post-transcriptionally: acts by phosphorylating AU-rich elements (AREs)-binding proteins, such as TTP/ZFP36, leading to regulate the stability and translation of TNF and IL6 mRNAs. Phosphorylation of TTP/ZFP36, a major post-transcriptional regulator of TNF, promotes its binding to 14-3-3 proteins and reduces its ARE mRNA affinity leading to inhibition of dependent degradation of ARE-containing transcript. Involved in toll-like receptor signaling pathway (TLR) in dendritic cells: required for acute TLR-induced macropinocytosis by phosphorylating and activating RPS6KA3. Also acts as a modulator of Polycomb-mediated repression. The protein is MAP kinase-activated protein kinase 3 (Mapkapk3) of Rattus norvegicus (Rat).